The sequence spans 87 residues: Cyclin-dependent kinases regulatory subunit 1 (87 aa).

The protein belongs to the CKS family. Interacts with CDKA-1. Interacts with CDKB1-1, CDKB1-2 and CDKB2-1. Interacts with CYCD2-1 and At4g14310.

Its function is as follows. Associates with cyclin-dependent kinases (CDKs) and plays an essential role in the regulation of the cell cycle that affects plant growth rate. May inhibit both the G1/S and G2/M phases. The chain is Cyclin-dependent kinases regulatory subunit 1 (CKS1) from Arabidopsis thaliana (Mouse-ear cress).